The sequence spans 1293 residues: Enterobactin synthase component F (1293 aa).

The tract at residues 1–301 (MSQHLPLVAA…NVLPLGIHIA (301 aa)) is elongation/condensation. Residues 482-887 (SYREMREQVV…ALPDVEQAVT (406 aa)) form an adenylatione region. The Carrier domain occupies 971 to 1046 (APKAGSETII…KLATIIDAEE (76 aa)). Ser1006 carries the O-(pantetheine 4'-phosphoryl)serine modification. The thioesterase stretch occupies residues 1066-1293 (PTLFCFHPAS…GPIIRATLNR (228 aa)). Catalysis depends on His1271, which acts as the Proton acceptor; for thioesterase activity.

Belongs to the ATP-dependent AMP-binding enzyme family. EntF subfamily. In terms of assembly, proteins EntB, EntD, EntE and EntF are the component of the enterobactin synthase. Components probably do not form a stable complex. EntF acts as a catalytic monomer. Interacts with the MbtH-like protein YbdZ. YbdZ binds to the adenylation domain, but does not alter the structure of the domain. Pantetheine 4'-phosphate serves as cofactor. Post-translationally, 4'-phosphopantetheine is transferred from CoA to a specific serine of apo-EntF by EntD. Holo-EntF so formed is then acylated with seryl-AMP.

It localises to the cytoplasm. It carries out the reaction 3 2,3-dihydroxybenzoate + 3 L-serine + 6 ATP = enterobactin + 6 AMP + 6 diphosphate + 4 H(+). The enzyme catalyses holo-[peptidyl-carrier protein] + L-serine + ATP = L-seryl-[peptidyl-carrier protein] + AMP + diphosphate. It participates in siderophore biosynthesis; enterobactin biosynthesis. With respect to regulation, adenylation activity is increased in the presence of the MbtH-like protein YbdZ. Its function is as follows. Involved in the biosynthesis of the siderophore enterobactin (enterochelin), which is a macrocyclic trimeric lactone of N-(2,3-dihydroxybenzoyl)-serine. EntF catalyzes the activation of L-serine via ATP-dependent PPi exchange reaction to form seryladenylate. Activated L-serine is loaded onto the peptidyl carrier domain via a thioester linkage to the phosphopanthetheine moiety, forming seryl-S-Ppant-EntF. EntF acts then as the sole catalyst for the formation of the three amide and three ester linkages found in enterobactin, using seryladenylate and 2,3-dihydroxybenzoate-S-Ppant-EntB (DHB-S-Ppant-EntB) as substrates, via the formation of a DHB-Ser-S-Ppant-EntF intermediate. The sequence is that of Enterobactin synthase component F from Escherichia coli (strain K12).